Reading from the N-terminus, the 65-residue chain is Large ribosomal subunit protein bL35c (65 aa).

Positions 25–44 are enriched in basic residues; the sequence is HKASKSHLLQKKSSKQRRHL. The segment at 25–45 is disordered; it reads HKASKSHLLQKKSSKQRRHLS.

Belongs to the bacterial ribosomal protein bL35 family.

The protein resides in the plastid. It is found in the chloroplast. This Pyropia yezoensis (Susabi-nori) protein is Large ribosomal subunit protein bL35c.